The primary structure comprises 312 residues: Regulation of nuclear pre-mRNA domain-containing protein 1A (312 aa).

Ser2 carries the post-translational modification N-acetylserine. The CID domain maps to Ser2–Lys133. 3 positions are modified to phosphoserine: Ser153, Ser156, and Ser285. Residues Leu244 to Leu286 adopt a coiled-coil conformation.

Belongs to the UPF0400 (RTT103) family. As to quaternary structure, may form a heterodimer with RPRD1B. Associates with the RNA polymerase II subunit POLR2A (via CTD phosphorylated at 'Ser-2' and 'Ser-7' of the heptad repeats).

The protein resides in the nucleus. Interacts with phosphorylated C-terminal heptapeptide repeat domain (CTD) of the largest RNA polymerase II subunit POLR2A, and participates in dephosphorylation of the CTD by RPAP2. May act as a negative regulator of cyclin-D1 (CCND1) and cyclin-E (CCNE1) in the cell cycle. The protein is Regulation of nuclear pre-mRNA domain-containing protein 1A (RPRD1A) of Pongo abelii (Sumatran orangutan).